The following is a 562-amino-acid chain: MENQKMPISSVSNLKDLNMISRPVANFPPSIWGDRFINYACEDENDQAQKEKQVEELKELVRRELAITVDKPLQQLNIIDATQRLGIAYLFENEIEESLEHIYLHTYVENTCFEGSDDLYSVALWFRLLRQNDYRVSCDVFNKFRDNEGNFKNNLMEDTKGLLELYEATHLSVHGEEMLDDALEFTKTRLESVVSHLNYPLAEQVRHALYQPLHKGLPRLEAVYFFRIYEAHASHNKALLKLAKLDFNLLQSFHKKELSDIARWWKSLDFAAKFPFARDRLVEGYFWVLGVYFEPQYSLARKIIIKVFTMISTIDDIYDAYGTLDELELFTKAMQRWDVGSLDQLPEYMKPCYKSILDVYNEIEVEMDNQGSLFRMHYAKEVMKKLVEGYMDEAKWCHEKYVPTFQEYMSVALVTSGYTFLTTISYLGMGEIASKEAFDWLFSHPPVIEASESVGRLMDDTRSHKFEQERGHVASGIECYMKQYGVTEEEARDEFRKRLVKAWKDINEECLRPYRVPKPLLMRILNLTRVIDVIYKNEDGYTHVKKAMKDNIASLLIDPMIV.

Mg(2+) contacts are provided by aspartate 315, aspartate 319, and glutamate 467. The DDXXD motif signature appears at 315–319; sequence DDIYD.

Belongs to the terpene synthase family. Tpsa subfamily. Mg(2+) is required as a cofactor. Mn(2+) serves as cofactor.

Sesquiterpene synthase. In Santalum austrocaledonicum (Sandalwood), this protein is Probable sesquiterpene synthase (SesquiTPS).